Reading from the N-terminus, the 674-residue chain is Carcinine transporter (674 aa).

Over 1–53 (MSDIEDNDGDEYDELSELRQRHKPESQPSVDEAFDLDDLLPTIGEFGKYQKLL) the chain is Cytoplasmic. The helical transmembrane segment at 54 to 74 (VFGICLPACIPCGFCAFNQLF) threads the bilayer. At 75–178 (MADTPDDYWC…DLVCDQDIYP (104 aa)) the chain is on the extracellular side. N-linked (GlcNAc...) asparagine glycans are attached at residues asparagine 122, asparagine 141, and asparagine 156. A helical transmembrane segment spans residues 179 to 199 (TIGLAALNTGGPVGVYLFGLL). At 200-206 (NDRGGRR) the chain is on the cytoplasmic side. The helical transmembrane segment at 207 to 227 (LSYFVCLATLLAGSLMTSLSK) threads the bilayer. At 228 to 236 (DFWTWAGSR) the chain is on the extracellular side. Residues 237-257 (VIVGLTIPAVYQIPFIISLEL) traverse the membrane as a helical segment. Topologically, residues 258–264 (VGENYRS) are cytoplasmic. Residues 265-285 (FVTVMTCTFYTSGIMLLSGVT) traverse the membrane as a helical segment. Topologically, residues 286-293 (YLERDWVR) are extracellular. Residues 294-314 (LSYITSLPFYAYFLYMFVMPE) form a helical membrane-spanning segment. The Cytoplasmic portion of the chain corresponds to 315 to 385 (SPRWLLMRGR…CRTPNMRLKT (71 aa)). A helical transmembrane segment spans residues 386–406 (ILITLSWFANETVYLGLSYYG). Residues 407-414 (PALGTNQY) lie on the Extracellular side of the membrane. A helical membrane pass occupies residues 415–435 (VSFFLSAVVELPSYLCCWYFM). The Cytoplasmic portion of the chain corresponds to 436–441 (DTWGRR). The chain crosses the membrane as a helical span at residues 442-462 (WPLSLSMILGGVACVITVMLP). Residues 463–469 (DDAVDET) lie on the Extracellular side of the membrane. The chain crosses the membrane as a helical span at residues 470 to 490 (LVLYLVSKALLSASFLIIYPF). The Cytoplasmic segment spans residues 491–500 (AGELYPTQVR). A helical transmembrane segment spans residues 501–521 (GIGIGASSYIGGLGLIGIPFI). The Extracellular portion of the chain corresponds to 522-527 (TYLGKD). A helical membrane pass occupies residues 528–548 (NLKLPLVIMGFLSMLGGMTGL). Over 549–674 (RLPETLHHRL…DGTMQLTHWI (126 aa)) the chain is Cytoplasmic. The span at 614–631 (RDSRRVREPAPRIDERTP) shows a compositional bias: basic and acidic residues. A disordered region spans residues 614–647 (RDSRRVREPAPRIDERTPLDTTASGSGRPVHRPS).

The protein belongs to the major facilitator (TC 2.A.1) superfamily. Organic cation transporter (TC 2.A.1.19) family. Expressed in photoreceptor cells.

It localises to the cell membrane. The protein localises to the cell projection. The protein resides in the axon. Functionally, carcinine transporter which is required for recycling of the neurotransmitter histamine in photoreceptor neurons of the compound eye. Following histamine release from photoreceptors and its uptake by glia where it is converted to carcinine, required for the uptake of carcinine from glia into photoreceptor cells where it can be hydrolyzed by tan to form histamine and beta-alanine. The polypeptide is Carcinine transporter (Drosophila melanogaster (Fruit fly)).